Reading from the N-terminus, the 490-residue chain is 7-ethoxycoumarin O-deethylase (490 aa).

Cysteine 432 is a heme binding site.

The protein belongs to the cytochrome P450 family. Heme serves as cofactor.

In terms of biological role, capable of dealkylating a model xenobiotic compound, 7-ethoxycoumarin. Metabolizes with high efficiency a wide range of xenobiotics, including alkoxycoumarins, alkoxyresorufins, and several herbicides of the class of phenylureas. Catalyzes the double N-dealkylation (oxidative N-demethylation) of phenylureas such as chlortoluron and isoproturon with turnover rates comparable to those reported for physiological substrates and produces non-phytotoxic compounds. Could be used for control of herbicide tolerance and selectivity, as well as soil and groundwater bioremediation. The protein is 7-ethoxycoumarin O-deethylase (CYP76B1) of Helianthus tuberosus (Jerusalem artichoke).